A 348-amino-acid polypeptide reads, in one-letter code: Beta-hexosaminidase (348 aa).

Residues D62, R70, R134, and K164 to H165 contribute to the substrate site. Residue H177 is the Proton donor/acceptor of the active site. D249 serves as the catalytic Nucleophile.

It belongs to the glycosyl hydrolase 3 family. NagZ subfamily.

The protein resides in the cytoplasm. It catalyses the reaction Hydrolysis of terminal non-reducing N-acetyl-D-hexosamine residues in N-acetyl-beta-D-hexosaminides.. It functions in the pathway cell wall biogenesis; peptidoglycan recycling. In terms of biological role, plays a role in peptidoglycan recycling by cleaving the terminal beta-1,4-linked N-acetylglucosamine (GlcNAc) from peptide-linked peptidoglycan fragments, giving rise to free GlcNAc, anhydro-N-acetylmuramic acid and anhydro-N-acetylmuramic acid-linked peptides. The chain is Beta-hexosaminidase from Histophilus somni (strain 2336) (Haemophilus somnus).